The following is a 121-amino-acid chain: MARIAGVDIPREKRIVISLTYVYGIGTSTANKIVEEANVSADTRVKDLTDDELGRIREVVDGYKVEGDLRREQNLNIKRLMEISSYRGIRHRRGLPVRGQKTKNNARTRKGPVKTVANKKK.

The tract at residues 91 to 121 is disordered; that stretch reads HRRGLPVRGQKTKNNARTRKGPVKTVANKKK.

The protein belongs to the universal ribosomal protein uS13 family. In terms of assembly, part of the 30S ribosomal subunit. Forms a loose heterodimer with protein S19. Forms two bridges to the 50S subunit in the 70S ribosome.

In terms of biological role, located at the top of the head of the 30S subunit, it contacts several helices of the 16S rRNA. In the 70S ribosome it contacts the 23S rRNA (bridge B1a) and protein L5 of the 50S subunit (bridge B1b), connecting the 2 subunits; these bridges are implicated in subunit movement. Contacts the tRNAs in the A and P-sites. The protein is Small ribosomal subunit protein uS13 of Staphylococcus epidermidis (strain ATCC 35984 / DSM 28319 / BCRC 17069 / CCUG 31568 / BM 3577 / RP62A).